A 229-amino-acid polypeptide reads, in one-letter code: Auxin-responsive protein IAA17 (229 aa).

The EAR-like (transcriptional repression) signature appears at 14 to 18 (LCLGL). Residues 110-211 (AAFVKVSMDG…TCKRLRLMKG (102 aa)) form the PB1 domain.

This sequence belongs to the Aux/IAA family. Homodimers and heterodimers. Interacts with the auxin response factors ARF1 and IAA24. Interacts with IAA1. Interacts with TPL. Interacts (via PB1 domain) with ARF7 (via PB1 domain). In terms of processing, phosphorylated by phytochrome A in vitro.

It is found in the nucleus. Its function is as follows. Aux/IAA proteins are short-lived transcriptional factors that function as repressors of early auxin response genes at low auxin concentrations. Repression is thought to result from the interaction with auxin response factors (ARFs), proteins that bind to the auxin-responsive promoter element (AuxRE). Formation of heterodimers with ARF proteins may alter their ability to modulate early auxin response genes expression. This is Auxin-responsive protein IAA17 (IAA17) from Arabidopsis thaliana (Mouse-ear cress).